Here is a 490-residue protein sequence, read N- to C-terminus: 5-hydroxytryptamine receptor 3A (490 aa).

Positions 1–19 are cleaved as a signal peptide; that stretch reads MVLWLQLALLALLLPTSLA. Residues 20 to 249 lie on the Extracellular side of the membrane; sequence QGEVRGKGTA…FYVVIRRRPL (230 aa). Asn-33, Asn-109, Asn-175, and Asn-191 each carry an N-linked (GlcNAc...) asparagine glycan. Cys-162 and Cys-176 are joined by a disulfide. A helical transmembrane segment spans residues 250–270; that stretch reads FYAVTLLLPSIFLMIVDIVGF. The Cytoplasmic portion of the chain corresponds to 271–285; that stretch reads YLPPDSGERVSFKIT. The chain crosses the membrane as a helical span at residues 286 to 306; it reads LLLGYSVFLIIVSDTLPATAI. Residues 307 to 312 are Extracellular-facing; that stretch reads GTPLIS. A helical membrane pass occupies residues 313–333; sequence VYFVVCMALLVISLAETILIV. Residues 334 to 467 lie on the Cytoplasmic side of the membrane; the sequence is RLVHKQDLQQ…GSVLDKLLFR (134 aa). The interval 401–422 is disordered; that stretch reads GGPQDLEKTSRGRGSPPPPPRE. The interval 426–462 is HA-stretch; determines single-channel conductance in 5-HT3 receptors; the sequence is AMCGLLQELASIRHFLEKREETREVARDWLRVGSVLD. The helical transmembrane segment at 468–488 threads the bilayer; that stretch reads VYLLAVLAYSITLVTLWSVWH. At 489-490 the chain is on the extracellular side; that stretch reads YA.

It belongs to the ligand-gated ion channel (TC 1.A.9) family. 5-hydroxytryptamine receptor (TC 1.A.9.2) subfamily. HTR3A sub-subfamily. Forms homopentameric as well as heteropentameric serotonin-activated cation-selective channel complexes with HTR3B or HTR3C or HTR3D or HTR3E. The homomeric complex is functional but exhibits low conductance with modified voltage dependence, and decreased agonist and antagonist affinity. Heteropentameric complexes display properties which resemble that of neuronal serotonin-activated channels in vivo. Interacts with RIC3. As to expression, expressed in cortex, intestine and liver. Not expressed in muscle or spleen.

The protein resides in the postsynaptic cell membrane. It localises to the cell membrane. The catalysed reaction is Na(+)(in) = Na(+)(out). It catalyses the reaction K(+)(in) = K(+)(out). The enzyme catalyses Ca(2+)(in) = Ca(2+)(out). It carries out the reaction Mg(2+)(in) = Mg(2+)(out). In terms of biological role, forms serotonin (5-hydroxytryptamine/5-HT3)-activated cation-selective channel complexes, which when activated cause fast, depolarizing responses in neurons. The sequence is that of 5-hydroxytryptamine receptor 3A from Cavia porcellus (Guinea pig).